A 426-amino-acid chain; its full sequence is Serine--tRNA ligase (426 aa).

233–235 (TAE) contacts L-serine. ATP is bound at residue 264–266 (RSE). Glu287 serves as a coordination point for L-serine. Position 351-354 (351-354 (EISS)) interacts with ATP. An L-serine-binding site is contributed by Ser387.

Belongs to the class-II aminoacyl-tRNA synthetase family. Type-1 seryl-tRNA synthetase subfamily. In terms of assembly, homodimer. The tRNA molecule binds across the dimer.

The protein resides in the cytoplasm. The catalysed reaction is tRNA(Ser) + L-serine + ATP = L-seryl-tRNA(Ser) + AMP + diphosphate + H(+). It catalyses the reaction tRNA(Sec) + L-serine + ATP = L-seryl-tRNA(Sec) + AMP + diphosphate + H(+). It participates in aminoacyl-tRNA biosynthesis; selenocysteinyl-tRNA(Sec) biosynthesis; L-seryl-tRNA(Sec) from L-serine and tRNA(Sec): step 1/1. Functionally, catalyzes the attachment of serine to tRNA(Ser). Is also able to aminoacylate tRNA(Sec) with serine, to form the misacylated tRNA L-seryl-tRNA(Sec), which will be further converted into selenocysteinyl-tRNA(Sec). The protein is Serine--tRNA ligase of Pseudomonas paraeruginosa (strain DSM 24068 / PA7) (Pseudomonas aeruginosa (strain PA7)).